Here is a 289-residue protein sequence, read N- to C-terminus: ADP-polyphosphate phosphotransferase (289 aa).

This sequence belongs to the polyphosphate kinase 2 (PPK2) family. Class I subfamily.

The enzyme catalyses [phosphate](n) + ATP = [phosphate](n+1) + ADP. Its function is as follows. Uses inorganic polyphosphate (polyP) as a donor to convert ADP to ATP. This chain is ADP-polyphosphate phosphotransferase, found in Rhodopseudomonas palustris (strain ATCC BAA-98 / CGA009).